The primary structure comprises 205 residues: Holliday junction branch migration complex subunit RuvA (205 aa).

The tract at residues 1–64 is domain I; it reads MIGRLRGVLI…EDAQLLYGFI (64 aa). A domain II region spans residues 65-143; that stretch reads TKKERSLFRL…SLMEASVGSE (79 aa). The interval 144–156 is flexible linker; that stretch reads REFVLQSNYSPAP. The interval 157–205 is domain III; that stretch reads TVNSAEEDAISALLSLGYKPPQASKAVSAAYKEGMDSETLIKAALKSML.

This sequence belongs to the RuvA family. Homotetramer. Forms an RuvA(8)-RuvB(12)-Holliday junction (HJ) complex. HJ DNA is sandwiched between 2 RuvA tetramers; dsDNA enters through RuvA and exits via RuvB. An RuvB hexamer assembles on each DNA strand where it exits the tetramer. Each RuvB hexamer is contacted by two RuvA subunits (via domain III) on 2 adjacent RuvB subunits; this complex drives branch migration. In the full resolvosome a probable DNA-RuvA(4)-RuvB(12)-RuvC(2) complex forms which resolves the HJ.

It is found in the cytoplasm. Its function is as follows. The RuvA-RuvB-RuvC complex processes Holliday junction (HJ) DNA during genetic recombination and DNA repair, while the RuvA-RuvB complex plays an important role in the rescue of blocked DNA replication forks via replication fork reversal (RFR). RuvA specifically binds to HJ cruciform DNA, conferring on it an open structure. The RuvB hexamer acts as an ATP-dependent pump, pulling dsDNA into and through the RuvAB complex. HJ branch migration allows RuvC to scan DNA until it finds its consensus sequence, where it cleaves and resolves the cruciform DNA. This chain is Holliday junction branch migration complex subunit RuvA, found in Shewanella sp. (strain MR-4).